The following is a 375-amino-acid chain: Chaperone protein DnaJ (375 aa).

A J domain is found at 5 to 70 (DYYEVLGVNR…QKKGAYDRYG (66 aa)). The CR-type zinc finger occupies 134–212 (GAEKTIRIPT…CGGAGRVKKQ (79 aa)). Residues cysteine 147, cysteine 150, cysteine 164, cysteine 167, cysteine 186, cysteine 189, cysteine 200, and cysteine 203 each contribute to the Zn(2+) site. CXXCXGXG motif repeat units lie at residues 147–154 (CGTCHGSG), 164–171 (CPTCGGAG), 186–193 (CPKCHGTG), and 200–207 (CGDCGGAG).

This sequence belongs to the DnaJ family. As to quaternary structure, homodimer. Requires Zn(2+) as cofactor.

It is found in the cytoplasm. Functionally, participates actively in the response to hyperosmotic and heat shock by preventing the aggregation of stress-denatured proteins and by disaggregating proteins, also in an autonomous, DnaK-independent fashion. Unfolded proteins bind initially to DnaJ; upon interaction with the DnaJ-bound protein, DnaK hydrolyzes its bound ATP, resulting in the formation of a stable complex. GrpE releases ADP from DnaK; ATP binding to DnaK triggers the release of the substrate protein, thus completing the reaction cycle. Several rounds of ATP-dependent interactions between DnaJ, DnaK and GrpE are required for fully efficient folding. Also involved, together with DnaK and GrpE, in the DNA replication of plasmids through activation of initiation proteins. The polypeptide is Chaperone protein DnaJ (Azoarcus sp. (strain BH72)).